A 310-amino-acid polypeptide reads, in one-letter code: Beta-1,3-galactosyltransferase 5 (310 aa).

Residues 1–7 (MAFPKMR) are Cytoplasmic-facing. The helical; Signal-anchor for type II membrane protein transmembrane segment at 8–28 (LMYICLLVLGALCLYFSMYSL) threads the bilayer. The Lumenal segment spans residues 29 to 310 (NPFKEQSFVY…NSRGEDCPPV (282 aa)). N-linked (GlcNAc...) asparagine glycosylation is found at asparagine 130, asparagine 174, and asparagine 231.

This sequence belongs to the glycosyltransferase 31 family. As to expression, expressed in stomach, jejunum, colon, pancreas, small intestine, testis and gastrointestinal and pancreatic cancer cell lines. Hardly detected in lung, liver, adrenal gland and peripheral blood leukocytes.

Its subcellular location is the golgi apparatus membrane. The enzyme catalyses a globoside Gb4Cer (d18:1(4E)) + UDP-alpha-D-galactose = a globoside GalGb4Cer (d18:1(4E)) + UDP + H(+). It functions in the pathway protein modification; protein glycosylation. Catalyzes the transfer of Gal to GlcNAc-based acceptors with a preference for the core3 O-linked glycan GlcNAc(beta1,3)GalNAc structure. Can use glycolipid LC3Cer as an efficient acceptor. The sequence is that of Beta-1,3-galactosyltransferase 5 from Homo sapiens (Human).